The sequence spans 243 residues: Carboxy-S-adenosyl-L-methionine synthase (243 aa).

Residues Y40, 65 to 67, 90 to 91, 118 to 119, N133, and R200 contribute to the S-adenosyl-L-methionine site; these read GCS, DN, and DI.

It belongs to the class I-like SAM-binding methyltransferase superfamily. Cx-SAM synthase family. Homodimer.

It catalyses the reaction prephenate + S-adenosyl-L-methionine = carboxy-S-adenosyl-L-methionine + 3-phenylpyruvate + H2O. Functionally, catalyzes the conversion of S-adenosyl-L-methionine (SAM) to carboxy-S-adenosyl-L-methionine (Cx-SAM). The polypeptide is Carboxy-S-adenosyl-L-methionine synthase (Shewanella piezotolerans (strain WP3 / JCM 13877)).